The following is a 74-amino-acid chain: Kappa-scoloptoxin(07)-Ssm2a (74 aa).

A signal peptide spans 1 to 19; the sequence is MLVFYALLFVTVFSNTVMG. The propeptide occupies 20-41; the sequence is ATIDKPIPKPILREAIEEIEVN.

The protein belongs to the scoloptoxin-07 family. In terms of processing, contains 3 disulfide bonds. In terms of tissue distribution, expressed by the venom gland.

The protein localises to the secreted. In terms of biological role, toxin that inhibits voltage-gated potassium channel currents in DRG neurons (IC(50)=about 570 nM). In vivo, induces neurotoxicity shown by twitching, paralysis, and body contraction. In vivo, insects injected with this toxin showed signs of neurotoxicity including twitching, paralysis, and body contraction. In Scolopendra mutilans (Chinese red-headed centipede), this protein is Kappa-scoloptoxin(07)-Ssm2a.